A 166-amino-acid chain; its full sequence is 2-amino-4-hydroxy-6-hydroxymethyldihydropteridine pyrophosphokinase (166 aa).

Belongs to the HPPK family.

The enzyme catalyses 6-hydroxymethyl-7,8-dihydropterin + ATP = (7,8-dihydropterin-6-yl)methyl diphosphate + AMP + H(+). The protein operates within cofactor biosynthesis; tetrahydrofolate biosynthesis; 2-amino-4-hydroxy-6-hydroxymethyl-7,8-dihydropteridine diphosphate from 7,8-dihydroneopterin triphosphate: step 4/4. Functionally, catalyzes the transfer of pyrophosphate from adenosine triphosphate (ATP) to 6-hydroxymethyl-7,8-dihydropterin, an enzymatic step in folate biosynthesis pathway. This Streptococcus pyogenes serotype M1 protein is 2-amino-4-hydroxy-6-hydroxymethyldihydropteridine pyrophosphokinase (folK).